We begin with the raw amino-acid sequence, 201 residues long: Small ribosomal subunit protein uS4c (201 aa).

Residues 89 to 152 enclose the S4 RNA-binding domain; sequence MRLDNILFRL…NSRTLVQNLL (64 aa).

Belongs to the universal ribosomal protein uS4 family. As to quaternary structure, part of the 30S ribosomal subunit. Contacts protein S5. The interaction surface between S4 and S5 is involved in control of translational fidelity.

It is found in the plastid. The protein resides in the chloroplast. One of the primary rRNA binding proteins, it binds directly to 16S rRNA where it nucleates assembly of the body of the 30S subunit. Functionally, with S5 and S12 plays an important role in translational accuracy. The polypeptide is Small ribosomal subunit protein uS4c (rps4) (Capsella bursa-pastoris (Shepherd's purse)).